The primary structure comprises 220 residues: Orotate phosphoribosyltransferase (220 aa).

Lysine 26 contacts 5-phospho-alpha-D-ribose 1-diphosphate. 34 to 35 (FF) is a binding site for orotate. 5-phospho-alpha-D-ribose 1-diphosphate-binding positions include 72-73 (YK), arginine 101, lysine 102, lysine 105, histidine 107, and 126-134 (DDVITAGTS). Residues threonine 130 and arginine 158 each contribute to the orotate site.

This sequence belongs to the purine/pyrimidine phosphoribosyltransferase family. PyrE subfamily. In terms of assembly, homodimer. Mg(2+) serves as cofactor.

It carries out the reaction orotidine 5'-phosphate + diphosphate = orotate + 5-phospho-alpha-D-ribose 1-diphosphate. Its pathway is pyrimidine metabolism; UMP biosynthesis via de novo pathway; UMP from orotate: step 1/2. Its function is as follows. Catalyzes the transfer of a ribosyl phosphate group from 5-phosphoribose 1-diphosphate to orotate, leading to the formation of orotidine monophosphate (OMP). In Bordetella avium (strain 197N), this protein is Orotate phosphoribosyltransferase.